Here is a 275-residue protein sequence, read N- to C-terminus: MGKSFSHLPLHSNKEDGYDGMTSTENIRNGLVNGEVHNEDGRSGDVSQFPYVEFTGRDSVTCPTCQGTGRIPRGQENQLVALIPYSDQRLRPRRTKLYVMASVFVCLLLSGLAVFFLFPRSIDVKYIGVKSAYVSYDVQKRTIYLNITNTLNITNNNYYSVEVENITAQVQFSKTVIGKARLNNITSIGPLDMKQIDYTVPTVIAEEMSYMFDFCTLLTIKVHNIVLMMQVTVTTTYFGHSEQISQERYQYVDCGRNTTYHLGQSEYLNVLQPQQ.

The segment at 1–24 (MGKSFSHLPLHSNKEDGYDGMTST) is disordered. The N-myristoyl glycine moiety is linked to residue glycine 2. Over 2 to 97 (GKSFSHLPLH…QRLRPRRTKL (96 aa)) the chain is Cytoplasmic. A helical membrane pass occupies residues 98–118 (YVMASVFVCLLLSGLAVFFLF). The Lumenal segment spans residues 119–275 (PRSIDVKYIG…EYLNVLQPQQ (157 aa)). N-linked (GlcNAc...) asparagine glycosylation is found at asparagine 146, asparagine 152, asparagine 165, and asparagine 184. A disulfide bridge links cysteine 215 with cysteine 254. Residue asparagine 257 is glycosylated (N-linked (GlcNAc...) asparagine).

It belongs to the TMEM106 family. In terms of assembly, can form homomers. Interacts (via N-terminus) with MAP6 (via C-terminus). Interacts (via C-terminus) with the vacuolar-type ATPase subunit ATP6AP1. Interacts (via N-terminus) with AP2M1 and CLTC. Interacts with TMEM106C.

It is found in the late endosome membrane. The protein resides in the lysosome membrane. Its subcellular location is the cell membrane. Functionally, in neurons, involved in the transport of late endosomes/lysosomes. May be involved in dendrite morphogenesis and maintenance by regulating lysosomal trafficking. May act as a molecular brake for retrograde transport of late endosomes/lysosomes, possibly via its interaction with MAP6. In motoneurons, may mediate the axonal transport of lysosomes and axonal sorting at the initial segment. It remains unclear whether TMEM106B affects the transport of moving lysosomes in the anterograde or retrograde direction in neurites and whether it is particularly important in the sorting of lysosomes in axons or in dendrites. In neurons, may also play a role in the regulation of lysosomal size and responsiveness to stress. Required for proper lysosomal acidification. This Bos taurus (Bovine) protein is Transmembrane protein 106B (TMEM106B).